We begin with the raw amino-acid sequence, 880 residues long: Beta-N-acetylglucosaminidase (880 aa).

Positions 1 to 27 (MKKRLIAPMLLSAASLAFFAMSGSAQA) are cleaved as a signal peptide. SPOR domains lie at 70 to 149 (SGTT…VKAY), 150 to 229 (GAAQ…LKET), and 230 to 311 (VKGQ…YQQV). Repeat copies occupy residues 439 to 473 (ITTE…GQTA) and 479 to 513 (ITTE…GQTA). The SH3b domain occupies 630-700 (TATSTVTADV…VDPNNFSRDS (71 aa)).

It belongs to the glycosyl hydrolase 73 family. In terms of assembly, homodimer.

It is found in the secreted. It localises to the cell wall. It carries out the reaction an N(4)-(oligosaccharide-(1-&gt;3)-[oligosaccharide-(1-&gt;6)]-beta-D-Man-(1-&gt;4)-beta-D-GlcNAc-(1-&gt;4)-alpha-D-GlcNAc)-L-asparaginyl-[protein] + H2O = an oligosaccharide-(1-&gt;3)-[oligosaccharide-(1-&gt;6)]-beta-D-Man-(1-&gt;4)-D-GlcNAc + N(4)-(N-acetyl-beta-D-glucosaminyl)-L-asparaginyl-[protein]. With respect to regulation, inhibited by diethyl pyrocarbonate, slightly by EDTA. Not inhibited by PMSF, diisopropyl fluorophosphate, 2-mercaptoethanol or N-ethylmaleimide. Cell wall hydrolase not involved in cell autolysis, competence, sporulation or germination. It hydrolyzes the beta-1,4 glycan bond between the N-acetylglucosaminyl and the N-acetylmuramoyl residues in the glycan chain. This is Beta-N-acetylglucosaminidase (lytD) from Bacillus subtilis (strain 168).